Consider the following 519-residue polypeptide: Probable DNA ligase (519 aa).

An ATP-binding site is contributed by E211. Residue K213 is the N6-AMP-lysine intermediate of the active site. Residues R218, R233, E262, F302, R374, and K380 each contribute to the ATP site.

Belongs to the ATP-dependent DNA ligase family. It depends on Mg(2+) as a cofactor.

It carries out the reaction ATP + (deoxyribonucleotide)n-3'-hydroxyl + 5'-phospho-(deoxyribonucleotide)m = (deoxyribonucleotide)n+m + AMP + diphosphate.. Its function is as follows. DNA ligase that seals nicks in double-stranded DNA during DNA replication, DNA recombination and DNA repair. In Anaeromyxobacter sp. (strain Fw109-5), this protein is Probable DNA ligase.